Here is a 156-residue protein sequence, read N- to C-terminus: Ribonuclease pancreatic (156 aa).

The signal sequence occupies residues 1–28 (MALEKSLALLPLLVLVLLVLGWVQPSLG). Residues Lys-35 and Arg-38 each coordinate substrate. Catalysis depends on His-40, which acts as the Proton acceptor. 4 cysteine pairs are disulfide-bonded: Cys-54–Cys-112, Cys-68–Cys-123, Cys-86–Cys-138, and Cys-93–Cys-100. Asn-62 carries N-linked (GlcNAc...) asparagine glycosylation. Residue 69–73 (KPVNT) participates in substrate binding. N-linked (GlcNAc...) asparagine glycosylation occurs at Asn-90. Substrate contacts are provided by Lys-94 and Arg-113. Catalysis depends on His-147, which acts as the Proton donor.

This sequence belongs to the pancreatic ribonuclease family. As to quaternary structure, monomer. Interacts with and forms tight 1:1 complexes with RNH1. Dimerization of two such complexes may occur. Interaction with RNH1 inhibits this protein.

Its subcellular location is the secreted. The catalysed reaction is an [RNA] containing cytidine + H2O = an [RNA]-3'-cytidine-3'-phosphate + a 5'-hydroxy-ribonucleotide-3'-[RNA].. It catalyses the reaction an [RNA] containing uridine + H2O = an [RNA]-3'-uridine-3'-phosphate + a 5'-hydroxy-ribonucleotide-3'-[RNA].. Its function is as follows. Endonuclease that catalyzes the cleavage of RNA on the 3' side of pyrimidine nucleotides. Acts on single-stranded and double-stranded RNA. The chain is Ribonuclease pancreatic (RNASE1) from Lagothrix lagotricha (Brown woolly monkey).